The chain runs to 443 residues: uncharacterized protein (443 aa).

4 consecutive transmembrane segments (helical) span residues 15–35, 38–58, 59–79, and 181–201; these read IYAG…DGLA, LGMA…GPGS, AWQG…LSWL, and VVTA…IPAL. A 4 X 10 AA approximate repeats region spans residues 231 to 270; that stretch reads NFGIGNIGNANLGNGNIGNANLGSGNAGFFNFGNGNDGNT.

The protein belongs to the mycobacterial PPE family.

Its subcellular location is the cell membrane. This is an uncharacterized protein from Mycobacterium tuberculosis (strain ATCC 25618 / H37Rv).